Reading from the N-terminus, the 252-residue chain is Imidazole glycerol phosphate synthase subunit HisF (252 aa).

Active-site residues include Asp11 and Asp130.

The protein belongs to the HisA/HisF family. Heterodimer of HisH and HisF.

It localises to the cytoplasm. It carries out the reaction 5-[(5-phospho-1-deoxy-D-ribulos-1-ylimino)methylamino]-1-(5-phospho-beta-D-ribosyl)imidazole-4-carboxamide + L-glutamine = D-erythro-1-(imidazol-4-yl)glycerol 3-phosphate + 5-amino-1-(5-phospho-beta-D-ribosyl)imidazole-4-carboxamide + L-glutamate + H(+). It participates in amino-acid biosynthesis; L-histidine biosynthesis; L-histidine from 5-phospho-alpha-D-ribose 1-diphosphate: step 5/9. In terms of biological role, IGPS catalyzes the conversion of PRFAR and glutamine to IGP, AICAR and glutamate. The HisF subunit catalyzes the cyclization activity that produces IGP and AICAR from PRFAR using the ammonia provided by the HisH subunit. In Bacillus cereus (strain Q1), this protein is Imidazole glycerol phosphate synthase subunit HisF.